We begin with the raw amino-acid sequence, 595 residues long: Elongation factor 4 (595 aa).

The tr-type G domain occupies 1–183 (MNVRNFSIIA…AIVERIPPPP (183 aa)). Residues 13–18 (DHGKST) and 130–133 (NKID) each bind GTP.

It belongs to the TRAFAC class translation factor GTPase superfamily. Classic translation factor GTPase family. LepA subfamily.

The protein localises to the cell membrane. It carries out the reaction GTP + H2O = GDP + phosphate + H(+). In terms of biological role, required for accurate and efficient protein synthesis under certain stress conditions. May act as a fidelity factor of the translation reaction, by catalyzing a one-codon backward translocation of tRNAs on improperly translocated ribosomes. Back-translocation proceeds from a post-translocation (POST) complex to a pre-translocation (PRE) complex, thus giving elongation factor G a second chance to translocate the tRNAs correctly. Binds to ribosomes in a GTP-dependent manner. This is Elongation factor 4 from Deinococcus geothermalis (strain DSM 11300 / CIP 105573 / AG-3a).